The sequence spans 168 residues: Group IIF secretory phospholipase A2 (168 aa).

The first 20 residues, 1–20 (MKKFFAIAVLAGSVVTTAHS), serve as a signal peptide directing secretion. 7 disulfides stabilise this stretch: Cys-46–Cys-138, Cys-48–Cys-64, Cys-63–Cys-120, Cys-69–Cys-145, Cys-70–Cys-113, Cys-79–Cys-106, and Cys-98–Cys-111. 3 residues coordinate Ca(2+): Tyr-47, Gly-49, and Gly-51. His-67 is a catalytic residue. Asp-68 is a Ca(2+) binding site. N-linked (GlcNAc...) asparagine glycans are attached at residues Asn-92 and Asn-102. Asp-114 is a catalytic residue. The interval 139-168 (QGPTPNCSIYDPYPEEVTCGHGLPATPVST) is required for localization on the plasma membrane. Asn-144 carries an N-linked (GlcNAc...) asparagine glycan.

It belongs to the phospholipase A2 family. Requires Ca(2+) as cofactor. Strongly expressed in testis.

It is found in the secreted. It localises to the cell membrane. The enzyme catalyses a 1,2-diacyl-sn-glycero-3-phosphocholine + H2O = a 1-acyl-sn-glycero-3-phosphocholine + a fatty acid + H(+). The catalysed reaction is 1-hexadecanoyl-2-(9Z-octadecenoyl)-sn-glycero-3-phospho-(1'-sn-glycerol) + H2O = 1-hexadecanoyl-sn-glycero-3-phospho-(1'-sn-glycerol) + (9Z)-octadecenoate + H(+). It carries out the reaction 1-hexadecanoyl-2-(9Z,12Z-octadecadienoyl)-sn-glycero-3-phosphoethanolamine + H2O = 1-hexadecanoyl-sn-glycero-3-phosphoethanolamine + (9Z,12Z)-octadecadienoate + H(+). It catalyses the reaction 1-hexadecanoyl-2-(5Z,8Z,11Z,14Z-eicosatetraenoyl)-sn-glycero-3-phosphoethanolamine + H2O = 1-hexadecanoyl-sn-glycero-3-phosphoethanolamine + (5Z,8Z,11Z,14Z)-eicosatetraenoate + H(+). The enzyme catalyses 1-hexadecanoyl-2-(9Z-octadecenoyl)-sn-glycero-3-phosphocholine + H2O = 1-hexadecanoyl-sn-glycero-3-phosphocholine + (9Z)-octadecenoate + H(+). The catalysed reaction is 1-hexadecanoyl-2-(9Z-octadecenoyl)-sn-glycero-3-phospho-L-serine + H2O = 1-hexadecanoyl-sn-glycero-3-phospho-L-serine + (9Z)-octadecenoate + H(+). Its function is as follows. Secretory calcium-dependent phospholipase A2 that primarily targets extracellular phospholipids. Hydrolyzes the ester bond of the fatty acyl group attached at the sn-2 position of phospholipids (phospholipase A2 activity), the catalytic efficiency decreasing in the following order: phosphatidylglycerols &gt; phosphatidylethanolamines &gt; phosphatidylcholines &gt; phosphatidylserines. May play a role in lipid mediator production in inflammatory conditions, by providing arachidonic acid to downstream cyclooxygenases and lipoxygenases. This chain is Group IIF secretory phospholipase A2 (Pla2g2f), found in Mus musculus (Mouse).